The primary structure comprises 220 residues: Octanoyltransferase (220 aa).

Residues E31 to A217 enclose the BPL/LPL catalytic domain. Substrate is bound by residues R70–H77, S146–G148, and G159–A161. C177 functions as the Acyl-thioester intermediate in the catalytic mechanism.

Belongs to the LipB family.

It localises to the cytoplasm. It carries out the reaction octanoyl-[ACP] + L-lysyl-[protein] = N(6)-octanoyl-L-lysyl-[protein] + holo-[ACP] + H(+). It functions in the pathway protein modification; protein lipoylation via endogenous pathway; protein N(6)-(lipoyl)lysine from octanoyl-[acyl-carrier-protein]: step 1/2. Its function is as follows. Catalyzes the transfer of endogenously produced octanoic acid from octanoyl-acyl-carrier-protein onto the lipoyl domains of lipoate-dependent enzymes. Lipoyl-ACP can also act as a substrate although octanoyl-ACP is likely to be the physiological substrate. This is Octanoyltransferase from Actinobacillus succinogenes (strain ATCC 55618 / DSM 22257 / CCUG 43843 / 130Z).